The chain runs to 747 residues: Pentatricopeptide repeat-containing protein At5g39710 (747 aa).

PPR repeat units follow at residues 133 to 167 (TSSV…GFMP), 168 to 203 (GVLS…QVSP), 204 to 238 (NVFT…GCLP), 239 to 273 (NVVT…GLEP), 274 to 308 (NLIS…GYSL), 309 to 343 (DEVT…GLTP), 344 to 378 (SVIT…GLCP), 379 to 413 (NERT…GFSP), 414 to 448 (SVVT…GLSP), 449 to 483 (DVVS…GIKP), 484 to 518 (DTIT…GLPP), 519 to 553 (DEFT…GVLP), 554 to 588 (DVVT…ESVP), 604 to 638 (EFKS…NHKP), and 639 to 673 (DGTA…GFLL).

The protein belongs to the PPR family. P subfamily.

This chain is Pentatricopeptide repeat-containing protein At5g39710 (EMB2745), found in Arabidopsis thaliana (Mouse-ear cress).